The primary structure comprises 764 residues: Thyrotropin receptor (764 aa).

Positions 1-20 are cleaved as a signal peptide; sequence MRPPPLLHLALLLALPRSLG. At 21–413 the chain is on the extracellular side; it reads GKGCPSPPCE…EFNPCEDIMG (393 aa). Cysteine 31 and cysteine 41 form a disulfide bridge. N-linked (GlcNAc...) asparagine glycosylation is found at asparagine 77 and asparagine 99. LRR repeat units follow at residues 125-149, 150-174, 176-199, 201-223, 225-248, and 250-271; these read LPLL…KVYS, TDVF…AFQG, CNET…AFNG, KLDA…AFGG, YSGP…GLEH, and KELI…SFLH. 2 N-linked (GlcNAc...) asparagine glycosylation sites follow: asparagine 177 and asparagine 198. N-linked (GlcNAc...) asparagine glycosylation is present at asparagine 302. Sulfotyrosine is present on tyrosine 385. Residues 414–441 form a helical membrane-spanning segment; it reads YKFLRIVVWFVSLLALLGNVFVLIVLLT. The Cytoplasmic segment spans residues 442–450; the sequence is SHYKLTVPR. The helical transmembrane segment at 451–473 threads the bilayer; sequence FLMCNLAFADFCMGMYLLLIASV. Topologically, residues 474–494 are extracellular; that stretch reads DLYTHSEYYNHAIDWQTGPGC. The cysteines at positions 494 and 569 are disulfide-linked. Residues 495–517 traverse the membrane as a helical segment; the sequence is NTAGFFTVFASELSVYTLTVITL. Topologically, residues 518–537 are cytoplasmic; that stretch reads ERWYAITFAMRLDRKIRLRH. Residues 538–560 form a helical membrane-spanning segment; it reads AYAIMVGGWVCCFLLALLPLVGI. The Extracellular segment spans residues 561 to 580; sequence SSYAKVSICLPMDTETPLAL. A helical transmembrane segment spans residues 581-602; it reads AYIILVLLLNIVAFIIVCSCYV. Residues 603–625 lie on the Cytoplasmic side of the membrane; that stretch reads KIYITVRNPQYNPGDKDTKIAKR. The chain crosses the membrane as a helical span at residues 626 to 649; that stretch reads MAVLIFTDFMCMAPISFYALSALM. Residues 650–660 lie on the Extracellular side of the membrane; that stretch reads NKPLITVTNSK. A helical transmembrane segment spans residues 661–682; it reads ILLVLFYPLNSCANPFLYAIFT. Over 683–764 the chain is Cytoplasmic; that stretch reads KAFQRDVFIL…ISKEYNQTVL (82 aa). Residues 762–764 carry the PDZ-binding motif; that stretch reads TVL.

Belongs to the G-protein coupled receptor 1 family. FSH/LSH/TSH subfamily. In terms of assembly, interacts with heterodimer GPHA2:GPHB5; this interaction stimulates cAMP production. Interacts (via the PDZ-binding motif) with SCRIB; regulates TSHR trafficking and function. Post-translationally, glycosylated. Sulfated. Sulfation on Tyr-385 plays a role in thyrotropin receptor binding and activation.

It localises to the cell membrane. It is found in the basolateral cell membrane. Functionally, receptor for the thyroid-stimulating hormone (TSH) or thyrotropin. Also acts as a receptor for the heterodimeric glycoprotein hormone (GPHA2:GPHB5) or thyrostimulin. The activity of this receptor is mediated by G proteins which activate adenylate cyclase. Plays a central role in controlling thyroid cell metabolism. In Canis lupus familiaris (Dog), this protein is Thyrotropin receptor (TSHR).